Here is a 185-residue protein sequence, read N- to C-terminus: Lipid A acyltransferase PagP (185 aa).

A signal peptide spans 1-24 (MKTHNDILAALAALPLFLTGAAFA). Residues H57, D100, and S101 contribute to the active site.

This sequence belongs to the lipid A palmitoyltransferase family. In terms of assembly, homodimer.

The protein resides in the cell outer membrane. It carries out the reaction a lipid A + a 1,2-diacyl-sn-glycero-3-phosphocholine = a hepta-acyl lipid A + a 2-acyl-sn-glycero-3-phosphocholine. The enzyme catalyses a lipid IVA + a 1,2-diacyl-sn-glycero-3-phosphocholine = a lipid IVB + a 2-acyl-sn-glycero-3-phosphocholine. It catalyses the reaction a lipid IIA + a 1,2-diacyl-sn-glycero-3-phosphocholine = a lipid IIB + a 2-acyl-sn-glycero-3-phosphocholine. Transfers a fatty acid residue from the sn-1 position of a phospholipid to the N-linked hydroxyfatty acid chain on the proximal unit of lipid A or its precursors. The polypeptide is Lipid A acyltransferase PagP (Edwardsiella tarda (strain FL6-60)).